Reading from the N-terminus, the 345-residue chain is Phenylalanine--tRNA ligase alpha subunit (345 aa).

Glu259 provides a ligand contact to Mg(2+).

The protein belongs to the class-II aminoacyl-tRNA synthetase family. Phe-tRNA synthetase alpha subunit type 1 subfamily. Tetramer of two alpha and two beta subunits. Mg(2+) is required as a cofactor.

The protein resides in the cytoplasm. It carries out the reaction tRNA(Phe) + L-phenylalanine + ATP = L-phenylalanyl-tRNA(Phe) + AMP + diphosphate + H(+). In Lactococcus lactis subsp. cremoris (strain SK11), this protein is Phenylalanine--tRNA ligase alpha subunit.